The chain runs to 147 residues: Putative cystatin-9-like protein CST9LP1 (147 aa).

A signal peptide spans 1-28 (MWSLPPSRALSCAPLLLLFSFQFLVTYA). An intrachain disulfide couples C98 to C108. Residues N117 and N139 are each glycosylated (N-linked (GlcNAc...) asparagine). C122 and C142 are joined by a disulfide.

Belongs to the cystatin family.

Its subcellular location is the secreted. The chain is Putative cystatin-9-like protein CST9LP1 (CST9LP1) from Homo sapiens (Human).